A 187-amino-acid polypeptide reads, in one-letter code: Adenine phosphoribosyltransferase (187 aa).

133-137 (ATGGS) provides a ligand contact to AMP.

The protein belongs to the purine/pyrimidine phosphoribosyltransferase family. As to quaternary structure, homodimer. The cofactor is Mg(2+).

The protein resides in the cytoplasm. Its subcellular location is the nucleus. The catalysed reaction is AMP + diphosphate = 5-phospho-alpha-D-ribose 1-diphosphate + adenine. The protein operates within purine metabolism; AMP biosynthesis via salvage pathway; AMP from adenine: step 1/1. Functionally, catalyzes a salvage reaction resulting in the formation of AMP, that is energically less costly than de novo synthesis. In Kluyveromyces lactis (strain ATCC 8585 / CBS 2359 / DSM 70799 / NBRC 1267 / NRRL Y-1140 / WM37) (Yeast), this protein is Adenine phosphoribosyltransferase (APT1).